A 238-amino-acid chain; its full sequence is ATP synthase subunit a (238 aa).

6 helical membrane-spanning segments follow: residues 18–38 (TTNLISGLVSALIVFCVVFAL), 76–96 (FGLYAFTLFLFIFVSNQIGLF), 114–134 (PIVTLTLSLITMMLAHYSGVA), 150–170 (FKVWLPIGVFTEFIDFLTLGL), 188–208 (GIAFSGGIVNMIVAIPLALIW), and 211–231 (FSVFLGSIQAFVFVTLTSVYI).

This sequence belongs to the ATPase A chain family. As to quaternary structure, F-type ATPases have 2 components, CF(1) - the catalytic core - and CF(0) - the membrane proton channel. CF(1) has five subunits: alpha(3), beta(3), gamma(1), delta(1), epsilon(1). CF(0) has three main subunits: a(1), b(2) and c(9-12). The alpha and beta chains form an alternating ring which encloses part of the gamma chain. CF(1) is attached to CF(0) by a central stalk formed by the gamma and epsilon chains, while a peripheral stalk is formed by the delta and b chains.

The protein localises to the cell membrane. Functionally, key component of the proton channel; it plays a direct role in the translocation of protons across the membrane. The protein is ATP synthase subunit a of Pediococcus pentosaceus (strain ATCC 25745 / CCUG 21536 / LMG 10740 / 183-1w).